A 175-amino-acid chain; its full sequence is Adenine phosphoribosyltransferase (175 aa).

The protein belongs to the purine/pyrimidine phosphoribosyltransferase family. As to quaternary structure, homodimer.

It localises to the cytoplasm. It carries out the reaction AMP + diphosphate = 5-phospho-alpha-D-ribose 1-diphosphate + adenine. The protein operates within purine metabolism; AMP biosynthesis via salvage pathway; AMP from adenine: step 1/1. Functionally, catalyzes a salvage reaction resulting in the formation of AMP, that is energically less costly than de novo synthesis. The sequence is that of Adenine phosphoribosyltransferase from Parvibaculum lavamentivorans (strain DS-1 / DSM 13023 / NCIMB 13966).